The chain runs to 469 residues: Probable acetate kinase (469 aa).

Asparagine 30 provides a ligand contact to Mg(2+). Position 37 (lysine 37) interacts with ATP. Arginine 122 lines the substrate pocket. Aspartate 179 functions as the Proton donor/acceptor in the catalytic mechanism. 239-243 (HLGSG) is a binding site for ATP. Glutamate 453 contacts Mg(2+).

Belongs to the acetokinase family. The cofactor is Mg(2+).

The enzyme catalyses acetate + ATP = acetyl phosphate + ADP. It functions in the pathway metabolic intermediate biosynthesis; acetyl-CoA biosynthesis; acetyl-CoA from acetate: step 1/2. The polypeptide is Probable acetate kinase (Neurospora crassa (strain ATCC 24698 / 74-OR23-1A / CBS 708.71 / DSM 1257 / FGSC 987)).